Here is a 180-residue protein sequence, read N- to C-terminus: Shikimate kinase (180 aa).

Residue 14-19 (GAGKST) participates in ATP binding. Ser18 is a binding site for Mg(2+). Residues Asp36, Arg60, and Gly82 each coordinate substrate. Position 120 (Arg120) interacts with ATP. Arg140 contributes to the substrate binding site. Gln157 provides a ligand contact to ATP.

It belongs to the shikimate kinase family. In terms of assembly, monomer. Mg(2+) serves as cofactor.

The protein localises to the cytoplasm. It catalyses the reaction shikimate + ATP = 3-phosphoshikimate + ADP + H(+). Its pathway is metabolic intermediate biosynthesis; chorismate biosynthesis; chorismate from D-erythrose 4-phosphate and phosphoenolpyruvate: step 5/7. Its function is as follows. Catalyzes the specific phosphorylation of the 3-hydroxyl group of shikimic acid using ATP as a cosubstrate. The sequence is that of Shikimate kinase from Haemophilus influenzae (strain PittEE).